The following is a 509-amino-acid chain: ATP synthase subunit alpha (509 aa).

169 to 176 serves as a coordination point for ATP; the sequence is GDRQTGKT.

Belongs to the ATPase alpha/beta chains family. As to quaternary structure, F-type ATPases have 2 components, CF(1) - the catalytic core - and CF(0) - the membrane proton channel. CF(1) has five subunits: alpha(3), beta(3), gamma(1), delta(1), epsilon(1). CF(0) has three main subunits: a(1), b(2) and c(9-12). The alpha and beta chains form an alternating ring which encloses part of the gamma chain. CF(1) is attached to CF(0) by a central stalk formed by the gamma and epsilon chains, while a peripheral stalk is formed by the delta and b chains.

It localises to the cell inner membrane. The enzyme catalyses ATP + H2O + 4 H(+)(in) = ADP + phosphate + 5 H(+)(out). In terms of biological role, produces ATP from ADP in the presence of a proton gradient across the membrane. The alpha chain is a regulatory subunit. The chain is ATP synthase subunit alpha from Rhizobium etli (strain CIAT 652).